Consider the following 362-residue polypeptide: Alanine racemase (362 aa).

Lysine 35 serves as the catalytic Proton acceptor; specific for D-alanine. Lysine 35 is modified (N6-(pyridoxal phosphate)lysine). Residue arginine 130 coordinates substrate. Catalysis depends on tyrosine 257, which acts as the Proton acceptor; specific for L-alanine. Methionine 305 provides a ligand contact to substrate.

Belongs to the alanine racemase family. It depends on pyridoxal 5'-phosphate as a cofactor.

It catalyses the reaction L-alanine = D-alanine. It participates in amino-acid biosynthesis; D-alanine biosynthesis; D-alanine from L-alanine: step 1/1. Its function is as follows. Catalyzes the interconversion of L-alanine and D-alanine. May also act on other amino acids. The polypeptide is Alanine racemase (alr) (Nitrosomonas europaea (strain ATCC 19718 / CIP 103999 / KCTC 2705 / NBRC 14298)).